We begin with the raw amino-acid sequence, 442 residues long: Choline monooxygenase, chloroplastic (442 aa).

The N-terminal 58 residues, 1-58, are a transit peptide targeting the chloroplast; sequence MASSASMLINYPTTFCGVRNSSNPNNDQFSDQINIPSSLNNNINISKITSKTNKIIPK. The Rieske domain maps to 123–229; it reads WQVAGYSDQI…VAIWGPFVLI (107 aa). Cys165, His167, Cys184, and His187 together coordinate [2Fe-2S] cluster. Positions 290 and 295 each coordinate Fe cation.

It belongs to the choline monooxygenase family. It depends on [2Fe-2S] cluster as a cofactor. The cofactor is Fe cation. Requires Mg(2+) as cofactor.

The protein localises to the plastid. It localises to the chloroplast stroma. It catalyses the reaction choline + 2 reduced [2Fe-2S]-[ferredoxin] + O2 + 2 H(+) = betaine aldehyde hydrate + 2 oxidized [2Fe-2S]-[ferredoxin] + H2O. It participates in amine and polyamine biosynthesis; betaine biosynthesis via choline pathway; betaine aldehyde from choline (monooxygenase route): step 1/1. Its function is as follows. Catalyzes the first step of the osmoprotectant glycine betaine synthesis. This Amaranthus tricolor (Joseph's coat) protein is Choline monooxygenase, chloroplastic (CMO).